The sequence spans 101 residues: NAD(P)H-quinone oxidoreductase subunit 4L, chloroplastic (101 aa).

Transmembrane regions (helical) follow at residues 2–22, 32–52, and 61–81; these read MLEHVLVLSAYLFSIGIYGLI, MCLELILNAVNMNLVTFSDFF, and IFSIFVIAIAAAEAAIGPAIV.

It belongs to the complex I subunit 4L family. As to quaternary structure, NDH is composed of at least 16 different subunits, 5 of which are encoded in the nucleus.

The protein resides in the plastid. It is found in the chloroplast thylakoid membrane. It catalyses the reaction a plastoquinone + NADH + (n+1) H(+)(in) = a plastoquinol + NAD(+) + n H(+)(out). It carries out the reaction a plastoquinone + NADPH + (n+1) H(+)(in) = a plastoquinol + NADP(+) + n H(+)(out). Functionally, NDH shuttles electrons from NAD(P)H:plastoquinone, via FMN and iron-sulfur (Fe-S) centers, to quinones in the photosynthetic chain and possibly in a chloroplast respiratory chain. The immediate electron acceptor for the enzyme in this species is believed to be plastoquinone. Couples the redox reaction to proton translocation, and thus conserves the redox energy in a proton gradient. The chain is NAD(P)H-quinone oxidoreductase subunit 4L, chloroplastic from Lotus japonicus (Lotus corniculatus var. japonicus).